A 756-amino-acid polypeptide reads, in one-letter code: MATLTDIGVAATINILTAFAFFIAFAILRLQPVNDRVYFPKWYLKGLRSSPIKTGGFASKFVNLDFRSYIRFLNWMPQALRMPEPELIDHAGLDSVVYLRIYLLGLKIFFPIACIAFTVMVPVNWTNSTLDQLKNLTFSDIDKLSISNIPTGSSRFWVHLCMAYVITFWTCFVLQREYKHIASMRLQFLASEHRRPDQFTVLVRNIPPDPDESVSELVEHFFKVNHPDYYLTYQAVYNANKLSELVQKRMKLQNWLDYYQNKHSRNPSKRPLIKIGFLGCWGEEVDAIDHYIEKIEGLTRKISEEKETVMSSTKSLVPAAFVSFKKRWGAVVCSQTQQSRNPTEWLTEWAPEPRDIYWDNLALPYVQLTIRRLVIAVAFFFLTFFFMIPIAFVQTLANIEGIEKAVPFLKPLIEVKTVKSFIQGFLPGIALKIFLIVLPSILMLMSKFEGFISKSSLERRCASRYYMFQFINVFLCSIIAGTALQQLDSFLNQSATEIPKTIGVSIPMKATFFITYIMVDGWAGVAGEILRLKPLIIYHLKNFFLVKTEKDREEAMDPGTIGFNTGEPQIQLYFILGLVYAAVSPILLPFILVFFALAYVVYRHQIINVYNQEYESAAAFWPDVHRRVVIALIVSQLLLMGLLSTKKAARSTPLLFILPVLTIGFHKFCQGRYQPIFVTYPLQDAMVKDTLERMREPNLNLKTFLQNAYAHPVFKAADNLANEMVVEEPAPDKTPDLVATKRGSRRFNSGSAETFT.

The next 10 membrane-spanning stretches (helical) occupy residues Ile-7–Ile-27, Ile-101–Val-121, Ser-154–Leu-174, Leu-373–Val-393, Phe-425–Met-445, Tyr-465–Gln-485, Ala-510–Leu-530, Phe-574–Phe-594, Val-628–Ala-648, and Ser-651–Gly-671. The tract at residues Pro-731–Thr-756 is disordered. The span at Arg-746 to Thr-756 shows a compositional bias: polar residues.

This sequence belongs to the CSC1 (TC 1.A.17) family.

It localises to the membrane. In terms of biological role, acts as an osmosensitive calcium-permeable cation channel. The chain is Hyperosmolality-gated Ca2+ permeable channel 1.5 from Arabidopsis thaliana (Mouse-ear cress).